The sequence spans 122 residues: Yop proteins translocation protein X (122 aa).

The stretch at 71–87 (HRAQDYRRELDTLQSLL) forms a coiled coil.

Interacts with YscY.

It is found in the secreted. Its function is as follows. Required for Yop secretion. This Yersinia enterocolitica protein is Yop proteins translocation protein X (yscX).